The chain runs to 116 residues: Iron-sulfur cluster insertion protein ErpA (116 aa).

Residues Cys44, Cys108, and Cys110 each contribute to the iron-sulfur cluster site.

This sequence belongs to the HesB/IscA family. Homodimer. Requires iron-sulfur cluster as cofactor.

Its function is as follows. Required for insertion of 4Fe-4S clusters for at least IspG. The protein is Iron-sulfur cluster insertion protein ErpA of Stutzerimonas stutzeri (strain A1501) (Pseudomonas stutzeri).